Here is a 461-residue protein sequence, read N- to C-terminus: Probable metabolite transport protein CsbC (461 aa).

Residues M1–G14 are Cytoplasmic-facing. A helical transmembrane segment spans residues A15–I35. At N36 to D38 the chain is on the extracellular side. Residues I39–F59 form a helical membrane-spanning segment. Over G60–V76 the chain is Cytoplasmic. A helical transmembrane segment spans residues V77–I97. The Extracellular segment spans residues G98–R104. The chain crosses the membrane as a helical span at residues V105–M125. At A126–N139 the chain is on the cytoplasmic side. A helical transmembrane segment spans residues L140–E160. Residues A161 to R163 are Extracellular-facing. Residues W164 to P184 traverse the membrane as a helical segment. At E185–P241 the chain is on the cytoplasmic side. Residues M242 to I262 form a helical membrane-spanning segment. Topologically, residues Y263–A280 are extracellular. A helical membrane pass occupies residues L281–I301. At D302–K308 the chain is on the cytoplasmic side. A helical transmembrane segment spans residues L309–L329. Residues T330–T341 lie on the Extracellular side of the membrane. Residues V342–V362 traverse the membrane as a helical segment. Over L363 to G378 the chain is Cytoplasmic. The chain crosses the membrane as a helical span at residues F379–L399. Topologically, residues S400–M402 are extracellular. A helical transmembrane segment spans residues G403–F423. Over Y424–L461 the chain is Cytoplasmic.

It belongs to the major facilitator superfamily. Sugar transporter (TC 2.A.1.1) family.

It is found in the cell membrane. In terms of biological role, could serve either a nutritional or an osmotic protection function. This chain is Probable metabolite transport protein CsbC (csbC), found in Bacillus subtilis (strain 168).